Consider the following 145-residue polypeptide: Flagellar assembly factor FliW (145 aa).

Belongs to the FliW family. As to quaternary structure, interacts with translational regulator CsrA and flagellin(s).

It localises to the cytoplasm. In terms of biological role, acts as an anti-CsrA protein, binds CsrA and prevents it from repressing translation of its target genes, one of which is flagellin. Binds to flagellin and participates in the assembly of the flagellum. The polypeptide is Flagellar assembly factor FliW (Thermosipho africanus (strain TCF52B)).